The sequence spans 535 residues: CTP synthase (535 aa).

Residues 1 to 268 (MSTKYIFVTG…DQIVCDHLKL (268 aa)) form an amidoligase domain region. Residue serine 14 coordinates CTP. Serine 14 provides a ligand contact to UTP. 15–20 (SMGKGI) provides a ligand contact to ATP. Tyrosine 55 provides a ligand contact to L-glutamine. ATP is bound at residue aspartate 72. Residues aspartate 72 and glutamate 142 each contribute to the Mg(2+) site. CTP contacts are provided by residues 149–151 (DME), 189–194 (KTKIAQ), and lysine 225. UTP contacts are provided by residues 189-194 (KTKIAQ) and lysine 225. The region spanning 293 to 535 (KIALVGKYVE…FIRVAVENSK (243 aa)) is the Glutamine amidotransferase type-1 domain. Glycine 355 contributes to the L-glutamine binding site. The Nucleophile; for glutamine hydrolysis role is filled by cysteine 382. Residues 383-386 (LGMQ), glutamate 406, and arginine 464 each bind L-glutamine. Residues histidine 509 and glutamate 511 contribute to the active site.

Belongs to the CTP synthase family. As to quaternary structure, homotetramer.

The enzyme catalyses UTP + L-glutamine + ATP + H2O = CTP + L-glutamate + ADP + phosphate + 2 H(+). The catalysed reaction is L-glutamine + H2O = L-glutamate + NH4(+). It catalyses the reaction UTP + NH4(+) + ATP = CTP + ADP + phosphate + 2 H(+). It functions in the pathway pyrimidine metabolism; CTP biosynthesis via de novo pathway; CTP from UDP: step 2/2. With respect to regulation, allosterically activated by GTP, when glutamine is the substrate; GTP has no effect on the reaction when ammonia is the substrate. The allosteric effector GTP functions by stabilizing the protein conformation that binds the tetrahedral intermediate(s) formed during glutamine hydrolysis. Inhibited by the product CTP, via allosteric rather than competitive inhibition. Its function is as follows. Catalyzes the ATP-dependent amination of UTP to CTP with either L-glutamine or ammonia as the source of nitrogen. Regulates intracellular CTP levels through interactions with the four ribonucleotide triphosphates. The chain is CTP synthase from Lactococcus lactis subsp. lactis (strain IL1403) (Streptococcus lactis).